The sequence spans 437 residues: Mannan endo-1,4-beta-mannosidase A (437 aa).

A signal peptide spans 1–19; the sequence is MMMLSKSLLSAATAASALA. The propeptide occupies 20–27; it reads AVLQPVPR. The interval 28-376 is catalytic; it reads ASSFVTISGT…VDAINGGTTT (349 aa). Cysteines 53 and 56 form a disulfide. 2 N-linked (GlcNAc...) asparagine glycosylation sites follow: N157 and N184. E196 (proton donor/acceptor) is an active-site residue. Residue 196 to 198 participates in substrate binding; it reads EPR. An intrachain disulfide couples C199 to C202. Substrate contacts are provided by E232 and W274. N277 carries N-linked (GlcNAc...) asparagine glycosylation. Residues C292 and C299 are joined by a disulfide bond. The active-site Nucleophile is the E303. C311 and C361 are oxidised to a cystine. N355 carries N-linked (GlcNAc...) asparagine glycosylation. Residues 372 to 399 form a disordered region; the sequence is GGTTTPPPVSSTTTTSSRTSSTPPPPGG. Residues 377 to 399 form a linker region; sequence PPPVSSTTTTSSRTSSTPPPPGG. Residues 381–392 are compositionally biased toward low complexity; sequence SSTTTTSSRTSS. The CBM1 domain occupies 400–435; the sequence is SCSPLYGQCGGSGYTGPTCCAQGTCIYSNYWYSQCL.

The protein belongs to the glycosyl hydrolase 5 (cellulase A) family. In terms of assembly, monomer.

The protein localises to the secreted. It carries out the reaction Random hydrolysis of (1-&gt;4)-beta-D-mannosidic linkages in mannans, galactomannans and glucomannans.. Its function is as follows. Endo-1,4-mannanase that catalyzes the random hydrolysis of (1-&gt;4)-beta-D-mannosidic linkages in mannans and heteromannans. It is a crucial enzyme for depolymerization of seed galactomannans and wood galactoglucomannans. Active against locust bean gum and ivory nut mannan, releasing mainly tri- and disaccharides. Also has transglycosylation activity. Transglycosylation of two mannotrioses into a mannohexaose is the major transglycosylation route. This Hypocrea jecorina (strain ATCC 56765 / BCRC 32924 / NRRL 11460 / Rut C-30) (Trichoderma reesei) protein is Mannan endo-1,4-beta-mannosidase A.